Consider the following 199-residue polypeptide: Transcription factor 15 (199 aa).

The tract at residues 25 to 67 (EENRSESDASDQSFGCCEGPEAARRGPGPGGGRRAGGGGGAGP) is disordered. Gly residues predominate over residues 51-66 (PGPGGGRRAGGGGGAG). Residues 72-124 (RQRQAANARERDRTQSVNTAFTALRTLIPTEPVDRKLSKIETVRLASSYIAHL) form the bHLH domain.

As to quaternary structure, heterodimer; efficient DNA binding requires dimerization with another bHLH protein, such as TCF3/E12. Interacts with MEOX2.

Its subcellular location is the nucleus. Its function is as follows. Early transcription factor that plays a key role in somitogenesis, paraxial mesoderm development and regulation of stem cell pluripotency. Essential for the mesenchymal to epithelial transition associated with somite formation. Required for somite morphogenesis, thereby regulating patterning of the axial skeleton and skeletal muscles. Required for proper localization of somite epithelium markers during the mesenchymal to epithelial transition. Also plays a key role in regulation of stem cell pluripotency. Promotes pluripotency exit of embryonic stem cells (ESCs) by priming ESCs for differentiation. Acts as a key regulator of self-renewal of hematopoietic stem cells (HSCs) by mediating HSCs quiescence and long-term self-renewal. Together with MEOX2, regulates transcription in heart endothelial cells to regulate fatty acid transport across heart endothelial cells. Acts by forming a heterodimer with another helix-loop-helix (bHLH) protein, such as TCF3/E12, that binds DNA on E-box motifs (5'-CANNTG-3') and activates transcription of target genes. This chain is Transcription factor 15, found in Homo sapiens (Human).